Here is a 266-residue protein sequence, read N- to C-terminus: 4-diphosphocytidyl-2-C-methyl-D-erythritol kinase (266 aa).

Residue K11 is part of the active site. 103–113 (PTFAGLGGGSS) contributes to the ATP binding site. Residue D145 is part of the active site.

The protein belongs to the GHMP kinase family. IspE subfamily.

The catalysed reaction is 4-CDP-2-C-methyl-D-erythritol + ATP = 4-CDP-2-C-methyl-D-erythritol 2-phosphate + ADP + H(+). Its pathway is isoprenoid biosynthesis; isopentenyl diphosphate biosynthesis via DXP pathway; isopentenyl diphosphate from 1-deoxy-D-xylulose 5-phosphate: step 3/6. Functionally, catalyzes the phosphorylation of the position 2 hydroxy group of 4-diphosphocytidyl-2C-methyl-D-erythritol. The sequence is that of 4-diphosphocytidyl-2-C-methyl-D-erythritol kinase from Sulfurimonas denitrificans (strain ATCC 33889 / DSM 1251) (Thiomicrospira denitrificans (strain ATCC 33889 / DSM 1251)).